A 158-amino-acid chain; its full sequence is Snaclec crotocetin-1 (158 aa).

The first 23 residues, 1-23, serve as a signal peptide directing secretion; sequence MGRFIFVSFGLLVVFLSLSGTGA. Intrachain disulfides connect Cys-27–Cys-38, Cys-55–Cys-152, and Cys-127–Cys-144. Residues 34-153 form the C-type lectin domain; that stretch reads YDQYCYRVIK…CEEKNLFVCK (120 aa).

The protein belongs to the snaclec family. In terms of assembly, heterodimer; disulfide-linked. Expressed by the venom gland.

It is found in the secreted. Functionally, interferes with one step of hemostasis (modulation of platelet aggregation, or coagulation cascade, for example). The chain is Snaclec crotocetin-1 from Crotalus durissus terrificus (South American rattlesnake).